Reading from the N-terminus, the 263-residue chain is 3-deoxy-manno-octulosonate cytidylyltransferase (263 aa).

The protein belongs to the KdsB family.

The protein resides in the cytoplasm. It carries out the reaction 3-deoxy-alpha-D-manno-oct-2-ulosonate + CTP = CMP-3-deoxy-beta-D-manno-octulosonate + diphosphate. The protein operates within nucleotide-sugar biosynthesis; CMP-3-deoxy-D-manno-octulosonate biosynthesis; CMP-3-deoxy-D-manno-octulosonate from 3-deoxy-D-manno-octulosonate and CTP: step 1/1. It functions in the pathway bacterial outer membrane biogenesis; lipopolysaccharide biosynthesis. In terms of biological role, activates KDO (a required 8-carbon sugar) for incorporation into bacterial lipopolysaccharide in Gram-negative bacteria. This is 3-deoxy-manno-octulosonate cytidylyltransferase from Burkholderia vietnamiensis (strain G4 / LMG 22486) (Burkholderia cepacia (strain R1808)).